We begin with the raw amino-acid sequence, 311 residues long: Tricarboxylate transport protein, mitochondrial (311 aa).

The propeptide at 1–13 (MAAARAPRALTSA) is removed in mature form. The span at 1-15 (MAAARAPRALTSASP) shows a compositional bias: low complexity. Positions 1-22 (MAAARAPRALTSASPGSGKAKL) are disordered. Solcar repeat units follow at residues 23–111 (THPG…LSNH), 122–208 (TRGL…LRNW), and 218–303 (MNPL…VVKL). The next 3 helical transmembrane spans lie at 29–46 (ILAG…TFPT), 86–105 (GLSS…FGTF), and 129–143 (LGAG…VCPM). Serine 156 is subject to Phosphoserine. The next 3 helical transmembrane spans lie at 183-202 (GLTA…FFVM), 224-241 (GVFG…NTPL), and 278-297 (GTVP…FIIY).

The protein belongs to the mitochondrial carrier (TC 2.A.29) family. In terms of processing, possesses a short cleavable presequence, which, however, is found to be dispensable both for targeting to mitochondria and insertion into the inner membrane. However, the presequence is required to keep SLC25A1 in a soluble state and thus in an import-competent state. Mature SLC25A1 lacking the presequence is prone to aggregation.

The protein resides in the mitochondrion inner membrane. The protein localises to the mitochondrion membrane. The enzyme catalyses (S)-malate(in) + citrate(out) = (S)-malate(out) + citrate(in). It catalyses the reaction D-threo-isocitrate(in) + citrate(out) = D-threo-isocitrate(out) + citrate(in). It carries out the reaction citrate(out) + succinate(in) = citrate(in) + succinate(out). The catalysed reaction is phosphoenolpyruvate(in) + citrate(out) = phosphoenolpyruvate(out) + citrate(in). The enzyme catalyses cis-aconitate(in) + citrate(out) = cis-aconitate(out) + citrate(in). It catalyses the reaction trans-aconitate(in) + citrate(out) = trans-aconitate(out) + citrate(in). It carries out the reaction maleate(in) + citrate(out) = maleate(out) + citrate(in). In terms of biological role, mitochondrial electroneutral antiporter that exports citrate from the mitochondria into the cytosol in exchange for malate. Also able to mediate the exchange of citrate for isocitrate, phosphoenolpyruvate, cis-aconitate and to a lesser extent trans-aconitate, maleate and succinate. In the cytoplasm, citrate plays important roles in fatty acid and sterol synthesis, regulation of glycolysis, protein acetylation, and other physiopathological processes. The protein is Tricarboxylate transport protein, mitochondrial (SLC25A1) of Bos taurus (Bovine).